We begin with the raw amino-acid sequence, 93 residues long: UPF0147 protein MJ1419 (93 aa).

It belongs to the UPF0147 family.

In Methanocaldococcus jannaschii (strain ATCC 43067 / DSM 2661 / JAL-1 / JCM 10045 / NBRC 100440) (Methanococcus jannaschii), this protein is UPF0147 protein MJ1419.